The following is a 358-amino-acid chain: Alanine racemase (358 aa).

Residue lysine 35 is the Proton acceptor; specific for D-alanine of the active site. Residue lysine 35 is modified to N6-(pyridoxal phosphate)lysine. Arginine 130 provides a ligand contact to substrate. The Proton acceptor; specific for L-alanine role is filled by tyrosine 255. Methionine 303 provides a ligand contact to substrate.

This sequence belongs to the alanine racemase family. Pyridoxal 5'-phosphate is required as a cofactor.

It catalyses the reaction L-alanine = D-alanine. Its pathway is amino-acid biosynthesis; D-alanine biosynthesis; D-alanine from L-alanine: step 1/1. Its function is as follows. Catalyzes the interconversion of L-alanine and D-alanine. May also act on other amino acids. The chain is Alanine racemase (alr) from Shewanella baltica (strain OS155 / ATCC BAA-1091).